Reading from the N-terminus, the 160-residue chain is Nuclear transcription factor Y subunit B-5 (160 aa).

Residues L56–G62 mediate DNA binding. Residues M83–V94 are subunit association domain (SAD).

The protein belongs to the NFYB/HAP3 subunit family. As to quaternary structure, heterotrimeric transcription factor composed of three components, NF-YA, NF-YB and NF-YC. NF-YB and NF-YC must interact and dimerize for NF-YA association and DNA binding. Expressed in flowers and siliques.

The protein resides in the nucleus. Functionally, component of the NF-Y/HAP transcription factor complex. The NF-Y complex stimulates the transcription of various genes by recognizing and binding to a CCAAT motif in promoters. This Arabidopsis thaliana (Mouse-ear cress) protein is Nuclear transcription factor Y subunit B-5 (NFYB5).